The primary structure comprises 251 residues: Ubiquinone/menaquinone biosynthesis C-methyltransferase UbiE (251 aa).

Residues Thr-74, Asp-95, 123 to 124 (NA), and Ser-140 contribute to the S-adenosyl-L-methionine site.

It belongs to the class I-like SAM-binding methyltransferase superfamily. MenG/UbiE family.

The enzyme catalyses a 2-demethylmenaquinol + S-adenosyl-L-methionine = a menaquinol + S-adenosyl-L-homocysteine + H(+). The catalysed reaction is a 2-methoxy-6-(all-trans-polyprenyl)benzene-1,4-diol + S-adenosyl-L-methionine = a 5-methoxy-2-methyl-3-(all-trans-polyprenyl)benzene-1,4-diol + S-adenosyl-L-homocysteine + H(+). It participates in quinol/quinone metabolism; menaquinone biosynthesis; menaquinol from 1,4-dihydroxy-2-naphthoate: step 2/2. Its pathway is cofactor biosynthesis; ubiquinone biosynthesis. Its function is as follows. Methyltransferase required for the conversion of demethylmenaquinol (DMKH2) to menaquinol (MKH2) and the conversion of 2-polyprenyl-6-methoxy-1,4-benzoquinol (DDMQH2) to 2-polyprenyl-3-methyl-6-methoxy-1,4-benzoquinol (DMQH2). This chain is Ubiquinone/menaquinone biosynthesis C-methyltransferase UbiE, found in Yersinia pestis bv. Antiqua (strain Antiqua).